The sequence spans 308 residues: Ribosomal protein L11 methyltransferase (308 aa).

S-adenosyl-L-methionine contacts are provided by Thr157, Gly178, Asp200, and Asn243.

It belongs to the methyltransferase superfamily. PrmA family.

Its subcellular location is the cytoplasm. It carries out the reaction L-lysyl-[protein] + 3 S-adenosyl-L-methionine = N(6),N(6),N(6)-trimethyl-L-lysyl-[protein] + 3 S-adenosyl-L-homocysteine + 3 H(+). Methylates ribosomal protein L11. This chain is Ribosomal protein L11 methyltransferase, found in Desulforamulus reducens (strain ATCC BAA-1160 / DSM 100696 / MI-1) (Desulfotomaculum reducens).